The chain runs to 1923 residues: Nuclear pore complex protein GP210 (1923 aa).

Residues 1 to 22 (MVPVSFCFFFLLLLLSAGESSS) form the signal peptide. N-linked (GlcNAc...) asparagine glycosylation is found at Asn73, Asn117, Asn289, Asn609, Asn863, Asn903, Asn967, Asn982, Asn1171, Asn1199, Asn1550, Asn1568, and Asn1743. The region spanning 1152 to 1205 (IFLVPGASYVLTIEGGPTMNVSVDYTTVDNEVAKIEKSGRLYATSPGNTTIYAT) is the BIG2 domain. A helical membrane pass occupies residues 1829–1849 (SVLLKILWGVLVLVVSVIILM).

This sequence belongs to the NUP210 family. In terms of assembly, part of the nuclear pore complex (NPC). The NPC has an eight-fold symmetrical structure comprising a central transport channel and two rings, the cytoplasmic and nuclear rings, to which eight filaments are attached. The cytoplasmic filaments have loose ends, while the nuclear filaments are joined in a distal ring, forming a nuclear basket. NPCs are highly dynamic in configuration and composition, and can be devided in 3 subcomplexes, the NUP62 subcomplex, the NUP107-160 subcomplex and the NUP93 subcomplex, containing approximately 30 different nucleoporin proteins.

Its subcellular location is the nucleus envelope. It localises to the nucleus membrane. The protein localises to the nucleus. The protein resides in the nuclear pore complex. This Arabidopsis thaliana (Mouse-ear cress) protein is Nuclear pore complex protein GP210.